A 210-amino-acid chain; its full sequence is Molybdenum cofactor guanylyltransferase (210 aa).

GTP-binding positions include 9–11 (LAG), K21, D66, and D95. Residue D95 participates in Mg(2+) binding.

Belongs to the MobA family. As to quaternary structure, monomer. Mg(2+) serves as cofactor.

It localises to the cytoplasm. It catalyses the reaction Mo-molybdopterin + GTP + H(+) = Mo-molybdopterin guanine dinucleotide + diphosphate. In terms of biological role, transfers a GMP moiety from GTP to Mo-molybdopterin (Mo-MPT) cofactor (Moco or molybdenum cofactor) to form Mo-molybdopterin guanine dinucleotide (Mo-MGD) cofactor. This Syntrophotalea carbinolica (strain DSM 2380 / NBRC 103641 / GraBd1) (Pelobacter carbinolicus) protein is Molybdenum cofactor guanylyltransferase.